A 575-amino-acid chain; its full sequence is RecBCD enzyme subunit RecD (575 aa).

ATP is bound at residue 170–177 (GGPGTGKT).

This sequence belongs to the RecD family. In terms of assembly, heterotrimer of RecB, RecC and RecD. All subunits contribute to DNA-binding.

It carries out the reaction Couples ATP hydrolysis with the unwinding of duplex DNA at the replication fork by translocating in the 5'-3' direction. This creates two antiparallel DNA single strands (ssDNA). The leading ssDNA polymer is the template for DNA polymerase III holoenzyme which synthesizes a continuous strand.. It catalyses the reaction ATP + H2O = ADP + phosphate + H(+). Functionally, a helicase/nuclease that prepares dsDNA breaks (DSB) for recombinational DNA repair. Binds to DSBs and unwinds DNA via a highly rapid and processive ATP-dependent bidirectional helicase activity. Holoenzyme degrades any linearized DNA that is unable to undergo homologous recombination. In the holoenzyme this subunit has ssDNA-dependent ATPase and 5'-3' helicase activity. When added to pre-assembled RecBC greatly stimulates nuclease activity and augments holoenzyme processivity. Unlike the case in E.coli, suppresses RecA-dependent homologous recombination, is instead required for single-strand annealing pathway repair of DSB. In terms of biological role, a helicase/nuclease that prepares dsDNA breaks (DSB) for recombinational DNA repair. Binds to DSBs and unwinds DNA via a highly rapid and processive ATP-dependent bidirectional helicase activity. Unwinds dsDNA until it encounters a Chi (crossover hotspot instigator) sequence from the 3' direction. Cuts ssDNA a few nucleotides 3' to the Chi site. The properties and activities of the enzyme are changed at Chi. The Chi-altered holoenzyme produces a long 3'-ssDNA overhang and facilitates RecA-binding to the ssDNA for homologous DNA recombination and repair. Holoenzyme degrades any linearized DNA that is unable to undergo homologous recombination. In the holoenzyme this subunit has ssDNA-dependent ATPase and 5'-3' helicase activity. When added to pre-assembled RecBC greatly stimulates nuclease activity and augments holoenzyme processivity. Negatively regulates the RecA-loading ability of RecBCD. This chain is RecBCD enzyme subunit RecD, found in Mycobacterium tuberculosis (strain CDC 1551 / Oshkosh).